A 95-amino-acid chain; its full sequence is QLYDIGARAAFPSQPSPYGMTSQGQTNLPQQVQPQLVSETISSIKCIYIGQNDLTGYAGVIDGQTAGASACSDPQNYVKALAYGILGGTNLNSYK.

The polypeptide is Nodulin (Striga hermonthica (Purple witchweed)).